We begin with the raw amino-acid sequence, 80 residues long: UPF0180 protein BPUM_1317 (80 aa).

This sequence belongs to the UPF0180 family.

This Bacillus pumilus (strain SAFR-032) protein is UPF0180 protein BPUM_1317.